We begin with the raw amino-acid sequence, 136 residues long: Small ribosomal subunit protein bS6 (136 aa).

The span at 97–128 (EKEQSAMLSRPDRDDFPGKDEERPRPSRRQYE) shows a compositional bias: basic and acidic residues. The interval 97 to 136 (EKEQSAMLSRPDRDDFPGKDEERPRPSRRQYEDVVEGGVE) is disordered.

This sequence belongs to the bacterial ribosomal protein bS6 family.

Functionally, binds together with bS18 to 16S ribosomal RNA. The protein is Small ribosomal subunit protein bS6 of Bartonella bacilliformis (strain ATCC 35685 / KC583 / Herrer 020/F12,63).